We begin with the raw amino-acid sequence, 454 residues long: Glutamyl-tRNA reductase (454 aa).

Residues 50–53, Ser103, 108–110, and Gln114 contribute to the substrate site; these read TCNR and EDQ. The Nucleophile role is filled by Cys51. 182 to 187 lines the NADP(+) pocket; it reads GAGEMG. The interval 407–454 is disordered; the sequence is LFDPNFGGDTPQPDRPDDIPRAAERGDISGDDLPDDVPNHIAEKVSDG. 2 stretches are compositionally biased toward basic and acidic residues: residues 418–434 and 443–454; these read QPDR…RGDI and VPNHIAEKVSDG.

The protein belongs to the glutamyl-tRNA reductase family. As to quaternary structure, homodimer.

It catalyses the reaction (S)-4-amino-5-oxopentanoate + tRNA(Glu) + NADP(+) = L-glutamyl-tRNA(Glu) + NADPH + H(+). The protein operates within porphyrin-containing compound metabolism; protoporphyrin-IX biosynthesis; 5-aminolevulinate from L-glutamyl-tRNA(Glu): step 1/2. Its function is as follows. Catalyzes the NADPH-dependent reduction of glutamyl-tRNA(Glu) to glutamate 1-semialdehyde (GSA). The sequence is that of Glutamyl-tRNA reductase from Haloquadratum walsbyi (strain DSM 16790 / HBSQ001).